Reading from the N-terminus, the 310-residue chain is MKVKSILKHSRMSSPSLETDSMESGQQQNMVSSTPSIDMNESDCSGTGTPSEERIRRLRWDEENLSKAEQQKSAKMKITEPKTPFQRFLLPDDEVPEINLDETDSKDDFTAGTLGDTLGTLPSTRVSKDSKDDNVSFSSDKKQFYVKKEPFPVPCTEPTTSGDRYTVRMKAPTPKYSTDNHLPSKKELFPRETKPQVEVVHARINNPDDHLRTHPSVNNLGKDSDHADKMYNEGVILGEDEAMEEEALSEAEENIPKKKPDFNELRKKHYFAMAKPLKRDELESSGTESDLERDNSDSGSASDVNMNENE.

The span at 1 to 11 (MKVKSILKHSR) shows a compositional bias: basic residues. Disordered regions lie at residues 1 to 227 (MKVK…SDHA) and 242 to 310 (AMEE…NENE). A compositionally biased stretch (polar residues) spans 12–50 (MSSPSLETDSMESGQQQNMVSSTPSIDMNESDCSGTGTP). Over residues 51 to 80 (SEERIRRLRWDEENLSKAEQQKSAKMKITE) the composition is skewed to basic and acidic residues. The span at 91–105 (PDDEVPEINLDETDS) shows a compositional bias: acidic residues. The segment covering 110 to 121 (TAGTLGDTLGTL) has biased composition (low complexity). Composition is skewed to basic and acidic residues over residues 126 to 150 (VSKD…KKEP) and 182 to 195 (LPSK…ETKP). Positions 242–253 (AMEEEALSEAEE) are enriched in acidic residues. A compositionally biased stretch (basic and acidic residues) spans 254–265 (NIPKKKPDFNEL). The residue at position 285 (serine 285) is a Phosphoserine. The span at 297–310 (DSGSASDVNMNENE) shows a compositional bias: polar residues.

This is an uncharacterized protein from Schizosaccharomyces pombe (strain 972 / ATCC 24843) (Fission yeast).